Consider the following 458-residue polypeptide: Jacalin-related lectin 22 (458 aa).

Jacalin-type lectin domains are found at residues 5-153, 160-301, and 311-453; these read YRKL…YFVL, LYKL…YFGP, and SKKL…TIVP.

This sequence belongs to the jacalin lectin family. As to quaternary structure, component of the PYK10 complex, at least composed of PYK10/BGLU23, BGLU21, BGLU22, JAL22, JAL23, PBP1/JAL30, PBP2/JAL31, JAL32, JAL33, JAL34, JAL35, GLL22 and GLL23.

In terms of biological role, inhibitor-type lectin that may regulate the correct polymerization and activation of BGLU23/PYK10 upon tissue damage. This is Jacalin-related lectin 22 (JAL22) from Arabidopsis thaliana (Mouse-ear cress).